A 65-amino-acid polypeptide reads, in one-letter code: Crotamine (65 aa).

The first 22 residues, 1–22, serve as a signal peptide directing secretion; the sequence is MKILYLLFAFLFLAFLSEPGNA. Short sequence motifs (nuclear localization signal) lie at residues 24–40 and 49–61; these read KQCHKKGGHCFPKEKIC and KMDCRWRWKCCKK. 3 disulfides stabilise this stretch: Cys26/Cys58, Cys33/Cys52, and Cys40/Cys59.

Belongs to the crotamine-myotoxin family. As to quaternary structure, monomer. Expressed by the venom gland.

Its subcellular location is the secreted. Its function is as follows. Cationic peptide that possesses multiple functions. It acts as a cell-penetrating peptide (CPP), and as a potent voltage-gated potassium channel inhibitor. It exhibits antimicrobial activities, hind limb paralysis, and severe muscle necrosis by a non-enzymatic mechanism. As a cell-penetrating peptide, crotamine has high specificity for actively proliferating cells, and interacts inside the cell with subcellular and subnuclear structures, like vesicular compartments, chromosomes and centrioles. It penetrates into the cells as fast as five minutes after its addition to cell culture medium. In vivo, after intraperitoneal administration, it is found in cells of peritoneal fluid and bone marrow, demonstrating preferential nuclear and perinuclear localization. To enter the cell, it interacts with the chains of heparan sulfate membrane proteoglycan (HSPG), and is endocytosed (in complex with HSPG) in vesicles which are transported into the cell with the help of clathrin. Inside the cell, crotamine accumulates in lysosomal vesicles. As soon as the peptide accumulates in endosomes/lysosomes vesicles, these compartments are disrupted and their contents released into the cytosol. This loss of lysosomal content induces cell death at high concentrations, or promotes the distribution of crotamine in cytoplasmic compartments, which is a step before crotamine nuclear uptake. As a potassium channel inhibitor, this toxin selectively inhibits Kv1.1/KCNA1, Kv1.2/KCNA2 and Kv1.3/KCNA3 channels with an IC(50) of 369, 386 and 287 nM, respectively. The inhibition of Kv1.3/KCNA channels induced by this toxin occurs rapidly and is voltage-independent. The channel inhibition is reversible after washing, suggesting a pure and classical channel blockage effect, without effects in potassium channel kinetics. As an antimicrobial peptide, crotamine shows antibacterial activity against E.coli and B.subtilis, and antifungal activity against Candida spp., Trichosporon spp. and C.neoformans. It kills bacteria through membrane permeabilization. The chain is Crotamine (CRO2) from Crotalus durissus terrificus (South American rattlesnake).